The following is a 542-amino-acid chain: Thermosome subunit alpha (542 aa).

This sequence belongs to the TCP-1 chaperonin family. In terms of assembly, forms a Heterooligomeric complex of two stacked eight-membered rings.

In terms of biological role, molecular chaperone; binds unfolded polypeptides in vitro, and has a weak ATPase activity. This Methanothermobacter thermautotrophicus (strain ATCC 29096 / DSM 1053 / JCM 10044 / NBRC 100330 / Delta H) (Methanobacterium thermoautotrophicum) protein is Thermosome subunit alpha (thsA).